The primary structure comprises 502 residues: Probable cytosol aminopeptidase (502 aa).

Mn(2+) is bound by residues Lys-265 and Asp-270. The active site involves Lys-277. Residues Asp-288, Asp-347, and Glu-349 each coordinate Mn(2+). Residue Arg-351 is part of the active site.

Belongs to the peptidase M17 family. The cofactor is Mn(2+).

It is found in the cytoplasm. It catalyses the reaction Release of an N-terminal amino acid, Xaa-|-Yaa-, in which Xaa is preferably Leu, but may be other amino acids including Pro although not Arg or Lys, and Yaa may be Pro. Amino acid amides and methyl esters are also readily hydrolyzed, but rates on arylamides are exceedingly low.. It carries out the reaction Release of an N-terminal amino acid, preferentially leucine, but not glutamic or aspartic acids.. In terms of biological role, presumably involved in the processing and regular turnover of intracellular proteins. Catalyzes the removal of unsubstituted N-terminal amino acids from various peptides. The chain is Probable cytosol aminopeptidase from Rickettsia bellii (strain OSU 85-389).